A 36-amino-acid chain; its full sequence is Light-harvesting protein B-1015 gamma chain (36 aa).

In terms of biological role, one of the components of the bacteriochlorophyll-protein complex in the chromatophore membrane. In Blastochloris viridis (Rhodopseudomonas viridis), this protein is Light-harvesting protein B-1015 gamma chain.